Here is a 431-residue protein sequence, read N- to C-terminus: 5-methylthioadenosine/S-adenosylhomocysteine deaminase (431 aa).

Residues histidine 64 and histidine 66 each contribute to the Zn(2+) site. Residues glutamate 93, arginine 145, and histidine 183 each coordinate substrate. Histidine 210 is a Zn(2+) binding site. Substrate contacts are provided by glutamate 213 and aspartate 299. Aspartate 299 is a Zn(2+) binding site.

Belongs to the metallo-dependent hydrolases superfamily. MTA/SAH deaminase family. Zn(2+) serves as cofactor.

It catalyses the reaction S-adenosyl-L-homocysteine + H2O + H(+) = S-inosyl-L-homocysteine + NH4(+). The enzyme catalyses S-methyl-5'-thioadenosine + H2O + H(+) = S-methyl-5'-thioinosine + NH4(+). Catalyzes the deamination of 5-methylthioadenosine and S-adenosyl-L-homocysteine into 5-methylthioinosine and S-inosyl-L-homocysteine, respectively. Is also able to deaminate adenosine. In Syntrophomonas wolfei subsp. wolfei (strain DSM 2245B / Goettingen), this protein is 5-methylthioadenosine/S-adenosylhomocysteine deaminase.